The following is a 349-amino-acid chain: KH domain-containing, RNA-binding, signal transduction-associated protein 2 (349 aa).

Residues 65-135 (LIPVKQYPKF…HLSDELHVLI (71 aa)) form the KH domain. 2 disordered regions span residues 181–263 (SEES…PPPA) and 320–349 (EEWTTTRSSLKAPPPRSARGGYREHPYGRY). Positions 218-231 (RGVLTPRGTTVTRG) are enriched in low complexity. Omega-N-methylarginine is present on residues Arg230 and Arg240. Over residues 340 to 349 (GYREHPYGRY) the composition is skewed to basic and acidic residues.

This sequence belongs to the KHDRBS family. In terms of assembly, self-associates to form homooligomers. Interacts with SAFB, SFRS9 and YTHDC1. Found in a complex with KHDRBS1, KHDRBS2 and KHDRBS3. Interacts with RBMX. Interacts with the SH3 domains of FYN and PLCG1. Interacts with the SH2 domains of FYN, GRAP2, PLCG1 and RASA1. Interacts with RBMX. Post-translationally, methylated. In terms of processing, phosphorylated on tyrosine residues by FYN. Tyrosine phosphorylated by PTK6 and SRC. Tyrosine phosphorylated by SRC during mitosis. As to expression, expressed in the cortex, cerebellum, striatum, midbrain, brainstem and thalamus of the brain (at protein level). Expressed in neurons (at protein level). Expressed in brain and testis. Expressed in the dentate gyrus of the hippocampus.

The protein resides in the nucleus. Its function is as follows. RNA-binding protein that plays a role in the regulation of alternative splicing and influences mRNA splice site selection and exon inclusion. Its phosphorylation by FYN inhibits its ability to regulate splice site selection. Induces an increased concentration-dependent incorporation of exon in CD44 pre-mRNA by direct binding to purine-rich exonic enhancer. May function as an adapter protein for Src kinases during mitosis. Binds both poly(A) and poly(U) homopolymers. Phosphorylation by PTK6 inhibits its RNA-binding ability. This Rattus norvegicus (Rat) protein is KH domain-containing, RNA-binding, signal transduction-associated protein 2 (Khdrbs2).